We begin with the raw amino-acid sequence, 229 residues long: Urease accessory protein UreF (229 aa).

The protein belongs to the UreF family. As to quaternary structure, ureD, UreF and UreG form a complex that acts as a GTP-hydrolysis-dependent molecular chaperone, activating the urease apoprotein by helping to assemble the nickel containing metallocenter of UreC. The UreE protein probably delivers the nickel.

It is found in the cytoplasm. Its function is as follows. Required for maturation of urease via the functional incorporation of the urease nickel metallocenter. This is Urease accessory protein UreF from Staphylococcus aureus (strain JH1).